The sequence spans 411 residues: Tyrosine--tRNA ligase (411 aa).

Y34 is an L-tyrosine binding site. The 'HIGH' region motif lies at 39–48; sequence CTATSLHIGS. Residues Y171 and Q175 each coordinate L-tyrosine. The short motif at 231 to 235 is the 'KMSKS' region element; sequence KMGKT. Position 234 (K234) interacts with ATP. An S4 RNA-binding domain is found at 345–411; sequence ISAYELFHEA…GKKKHILVRV (67 aa).

The protein belongs to the class-I aminoacyl-tRNA synthetase family. TyrS type 1 subfamily. Homodimer.

It localises to the cytoplasm. The enzyme catalyses tRNA(Tyr) + L-tyrosine + ATP = L-tyrosyl-tRNA(Tyr) + AMP + diphosphate + H(+). In terms of biological role, catalyzes the attachment of tyrosine to tRNA(Tyr) in a two-step reaction: tyrosine is first activated by ATP to form Tyr-AMP and then transferred to the acceptor end of tRNA(Tyr). The sequence is that of Tyrosine--tRNA ligase from Rickettsia conorii (strain ATCC VR-613 / Malish 7).